The sequence spans 39 residues: Potassium channel toxin alpha-KTx 2.5 (39 aa).

3 cysteine pairs are disulfide-bonded: Cys7/Cys29, Cys13/Cys34, and Cys17/Cys36.

It belongs to the short scorpion toxin superfamily. Potassium channel inhibitor family. Alpha-KTx 02 subfamily. In terms of tissue distribution, expressed by the venom gland.

It localises to the secreted. Functionally, potent selective inhibitor of Kv1.1/KCNA1, Kv1.2/KCNA2, Kv1.3/KCNA3 voltage-gated potassium channels. Weak inhibitor of Kv1.6/KCNA6 potassium channel. It also shows a weak interaction with nicotinic acetylcholine receptors (nAChR), suggesting it may weakly inhibit it. This chain is Potassium channel toxin alpha-KTx 2.5, found in Centruroides limbatus (Bark scorpion).